Reading from the N-terminus, the 438-residue chain is Probable inactive protein kinase 38 (438 aa).

The Protein kinase domain occupies 77–340 (PRFRLALGKG…FTELQPQYFL (264 aa)).

This sequence belongs to the protein kinase superfamily. Tyr protein kinase family.

This chain is Probable inactive protein kinase 38 (36), found in Equus caballus (Horse).